A 596-amino-acid polypeptide reads, in one-letter code: Interleukin-1 receptor-associated kinase 3 (596 aa).

The Death domain maps to 41 to 106 (WRGLAERLSS…RAIHLITNYG (66 aa)). Ser110 carries the post-translational modification Phosphoserine; by IRAK1. The Protein kinase domain occupies 165–452 (FHKDFLIGEG…LESTQASLYF (288 aa)). Residues 171–179 (IGEGEIFEV), Lys192, 295–298 (SSAN), and Asp311 contribute to the ATP site. Ser467 carries the phosphoserine modification. Positions 560-596 (NIDPSSEAPGHSCRSRPVESSCSSKFSWDEYEQYKKE) are disordered.

The protein belongs to the protein kinase superfamily. TKL Ser/Thr protein kinase family. Pelle subfamily. As to quaternary structure, monomer. Homodimer; disulfide-linked. May interact with IRAK4 (when phosphorylated). Interacts (when phosphorylated at Ser-110) with PIN1 (via WW domain) in response to IL33-mediated (but not TLR4 ligand LPS) dendritic cell stimulation. As to expression, expressed in eosinophils, dendritic cells and/or monocytes (at protein level). Expressed predominantly in peripheral blood lymphocytes.

The protein localises to the cytoplasm. Its subcellular location is the nucleus. Functionally, putative inactive protein kinase which regulates signaling downstream of immune receptors including IL1R and Toll-like receptors. Inhibits dissociation of IRAK1 and IRAK4 from the Toll-like receptor signaling complex by either inhibiting the phosphorylation of IRAK1 and IRAK4 or stabilizing the receptor complex. Upon IL33-induced lung inflammation, positively regulates expression of IL6, CSF3, CXCL2 and CCL5 mRNAs in dendritic cells. In Homo sapiens (Human), this protein is Interleukin-1 receptor-associated kinase 3.